The following is a 135-amino-acid chain: VapC ribonuclease aq_1901 (135 aa).

The 128-residue stretch at 3–130 (LLDTTVLLDF…FKKLGFKTVN (128 aa)) folds into the PINc domain. Asp-5 serves as a coordination point for Mg(2+).

The protein belongs to the PINc/VapC protein family. It depends on Mg(2+) as a cofactor.

In terms of biological role, toxic component of a type II toxin-antitoxin (TA) system. An RNase. In Aquifex aeolicus (strain VF5), this protein is VapC ribonuclease aq_1901.